The following is a 718-amino-acid chain: Mitochondrial potassium channel ATP-binding subunit (718 aa).

The N-terminal 25 residues, 1 to 25 (MLVHLFRVGIRGGPFPGRLLPPLRF), are a transit peptide targeting the mitochondrion. 3 helical membrane passes run 128-148 (LLVL…NVQI), 179-199 (THLL…LVLL), and 279-299 (LLLM…GSGL). The ABC transmembrane type-1 domain occupies 133–420 (VAVVLALGAA…LSVLFGQVVR (288 aa)). The ABC transporter domain maps to 455 to 692 (VTFQNVCFSY…GGLYAELIRR (238 aa)). Residue 490-497 (GQSGGGKT) participates in ATP binding. Residues 697–718 (APRTAAPLPKKPEGPRNHQHKS) are disordered.

The protein belongs to the ABC transporter superfamily. ABCB family. Multidrug resistance exporter (TC 3.A.1.201) subfamily. As to quaternary structure, the mitochondrial potassium channel (mitoK(ATP)) is composed of 4 subunits of CCDC51/MITOK and 4 subunits of ABCB8/MITOSUR. Physically interacts with PAAT. Interacts with Neuropilin-1 (NRP1) in mitochondria.

It localises to the mitochondrion inner membrane. Channel activity inhibited by ATP via ABCB8/MITOSUR subunit. In terms of biological role, ATP-binding subunit of the mitochondrial ATP-gated potassium channel (mitoK(ATP)). Together with pore-forming subunit CCDC51/MITOK of the mitoK(ATP) channel, mediates ATP-dependent potassium currents across the mitochondrial inner membrane. An increase in ATP intracellular levels closes the channel, inhibiting K(+) transport, whereas a decrease in ATP levels enhances K(+) uptake in the mitochondrial matrix. Plays a role in mitochondrial iron transport. Required for maintenance of normal cardiac function, possibly by influencing mitochondrial iron export and regulating the maturation of cytosolic iron sulfur cluster-containing enzymes. The protein is Mitochondrial potassium channel ATP-binding subunit (ABCB8) of Pongo abelii (Sumatran orangutan).